The following is a 156-amino-acid chain: UPF0523 protein C (156 aa).

The protein belongs to the UPF0523 family.

The sequence is that of UPF0523 protein C from Dictyostelium discoideum (Social amoeba).